A 217-amino-acid polypeptide reads, in one-letter code: uncharacterized protein (217 aa).

2 helical membrane-spanning segments follow: residues 151–171 and 177–197; these read LIPF…HSLF and ISFH…FILF.

The protein resides in the mitochondrion membrane. This is an uncharacterized protein from Schizosaccharomyces pombe (strain 972 / ATCC 24843) (Fission yeast).